Reading from the N-terminus, the 111-residue chain is Prostate and testis expressed protein 2 (111 aa).

Residues 1–18 form the signal peptide; the sequence is MFVLVMICLFCQYWGVLN. In terms of domain architecture, UPAR/Ly6 spans 27–108; it reads LLCYKCKKYH…CKHSNYCNLP (82 aa). 4 disulfides stabilise this stretch: Cys29–Cys55, Cys32–Cys40, Cys47–Cys78, and Cys82–Cys99.

This sequence belongs to the PATE family. Expressed in prostate, testis, brain and lung.

It is found in the secreted. This Mus musculus (Mouse) protein is Prostate and testis expressed protein 2 (Pate2).